Consider the following 238-residue polypeptide: CD63 antigen (238 aa).

The Cytoplasmic segment spans residues 2-11 (AVEGGMKCVK). Residues 12–32 (FLLYVLLLAFCACAVGLIAVG) form a helical membrane-spanning segment. The Extracellular portion of the chain corresponds to 33-51 (VGAQLVLSQTIIQGATPGS). A helical transmembrane segment spans residues 52–72 (LLPVVIIAVGVFLFLVAFVGC). The Cytoplasmic portion of the chain corresponds to 73 to 81 (CGACKENYC). The helical transmembrane segment at 82-102 (LMITFAIFLSLIMLVEVAAAI) threads the bilayer. Over 103–203 (AGYVFRDKVM…KIGGWLRKNV (101 aa)) the chain is Extracellular. 3 N-linked (GlcNAc...) asparagine glycosylation sites follow: N130, N150, and N172. Residues 204 to 224 (LVVAAAALGIAFVEVLGIVFA) traverse the membrane as a helical segment. Residues 225–238 (CCLVKSIRSGYEVM) are Cytoplasmic-facing. A Lysosomal targeting motif motif is present at residues 234–238 (GYEVM).

Belongs to the tetraspanin (TM4SF) family. As to quaternary structure, interacts with TIMP1 and ITGB1 and recruits TIMP1 to ITGB1. Interacts with CD9. Identified in a complex with CD9 and ITGB3. Interacts with PMEL. Interacts with KDR/VEGFR2; identified in a complex with ITGB1 and KDR/VEGFR2 and is required to recruit KDR to ITGB1 complexes. Interacts with SYT7. Post-translationally, palmitoylated at a low, basal level in unstimulated platelets. The level of palmitoylation increases when platelets are activated by thrombin (in vitro). Detected in platelets (at protein level). Dysplastic nevi, radial growth phase primary melanomas, hematopoietic cells, tissue macrophages.

Its subcellular location is the cell membrane. The protein localises to the lysosome membrane. The protein resides in the late endosome membrane. It localises to the endosome. It is found in the multivesicular body. Its subcellular location is the melanosome. The protein localises to the secreted. The protein resides in the extracellular exosome. It localises to the cell surface. Functions as a cell surface receptor for TIMP1 and plays a role in the activation of cellular signaling cascades. Plays a role in the activation of ITGB1 and integrin signaling, leading to the activation of AKT, FAK/PTK2 and MAP kinases. Promotes cell survival, reorganization of the actin cytoskeleton, cell adhesion, spreading and migration, via its role in the activation of AKT and FAK/PTK2. Plays a role in VEGFA signaling via its role in regulating the internalization of KDR/VEGFR2. Plays a role in intracellular vesicular transport processes, and is required for normal trafficking of the PMEL luminal domain that is essential for the development and maturation of melanocytes. Plays a role in the adhesion of leukocytes onto endothelial cells via its role in the regulation of SELP trafficking. May play a role in mast cell degranulation in response to Ms4a2/FceRI stimulation, but not in mast cell degranulation in response to other stimuli. This is CD63 antigen (CD63) from Homo sapiens (Human).